The following is a 485-amino-acid chain: GTPase Obg (485 aa).

The Obg domain occupies 2 to 159 (PRFVDRVVIH…RDLTLELKTV (158 aa)). The OBG-type G domain maps to 160–341 (ADVGLIGFPS…LIFALWEMVK (182 aa)). GTP is bound by residues 166–173 (GFPSAGKS), 191–195 (FTTLV), 212–215 (DVPG), 292–295 (NKID), and 322–324 (STV). Mg(2+) contacts are provided by Ser-173 and Thr-193. In terms of domain architecture, OCT spans 359-437 (PIPVDESGFT…IGDVTFDWEP (79 aa)). Positions 450–485 (RGTDIRLEQTDRVGAAERKAARRERRQPGESGGEDS) are disordered. Over residues 452–468 (TDIRLEQTDRVGAAERK) the composition is skewed to basic and acidic residues.

It belongs to the TRAFAC class OBG-HflX-like GTPase superfamily. OBG GTPase family. As to quaternary structure, monomer. Mg(2+) is required as a cofactor.

The protein resides in the cytoplasm. Functionally, an essential GTPase which binds GTP, GDP and possibly (p)ppGpp with moderate affinity, with high nucleotide exchange rates and a fairly low GTP hydrolysis rate. Plays a role in control of the cell cycle, stress response, ribosome biogenesis and in those bacteria that undergo differentiation, in morphogenesis control. The protein is GTPase Obg of Mycolicibacterium smegmatis (strain ATCC 700084 / mc(2)155) (Mycobacterium smegmatis).